The primary structure comprises 487 residues: N-succinylglutamate 5-semialdehyde dehydrogenase (487 aa).

The tract at residues 1-23 (MTHFIKGQWQAGKGHDVTSSNPA) is disordered. Position 220-225 (220-225 (GSSRTG)) interacts with NAD(+). Active-site residues include Glu-243 and Cys-277.

This sequence belongs to the aldehyde dehydrogenase family. AstD subfamily.

The catalysed reaction is N-succinyl-L-glutamate 5-semialdehyde + NAD(+) + H2O = N-succinyl-L-glutamate + NADH + 2 H(+). Its pathway is amino-acid degradation; L-arginine degradation via AST pathway; L-glutamate and succinate from L-arginine: step 4/5. Catalyzes the NAD-dependent reduction of succinylglutamate semialdehyde into succinylglutamate. This Shewanella sp. (strain ANA-3) protein is N-succinylglutamate 5-semialdehyde dehydrogenase.